Consider the following 196-residue polypeptide: Elongation factor Ts (196 aa).

An involved in Mg(2+) ion dislocation from EF-Tu region spans residues 80 to 83 (TDFV).

Belongs to the EF-Ts family.

Its subcellular location is the cytoplasm. Associates with the EF-Tu.GDP complex and induces the exchange of GDP to GTP. It remains bound to the aminoacyl-tRNA.EF-Tu.GTP complex up to the GTP hydrolysis stage on the ribosome. The protein is Elongation factor Ts of Thermus thermophilus (strain ATCC BAA-163 / DSM 7039 / HB27).